The sequence spans 487 residues: Keratin, type I cytoskeletal 12 (487 aa).

A head region spans residues 1–118; sequence MSLSVCTSAL…GNDGGLLSGS (118 aa). The interval 119–154 is coil 1A; that stretch reads EKETMQNLNDRLASYLGKVRSLEEANAELENKIREW. The IF rod domain occupies 119-433; the sequence is EKETMQNLND…RLLEGDSQGD (315 aa). Residues 158–175 are linker 1; it reads RRTRDAGSQSDYSKYYPL. The tract at residues 176–267 is coil 1B; the sequence is IEDLKNKIVS…KNHEEELQSF (92 aa). A linker 12 region spans residues 268–290; it reads QAGGPGEVNVEMDAAPGVDLTKV. Residues 291–428 form a coil 2 region; sequence LNEMRAQYEA…IETYRRLLEG (138 aa). The disordered stretch occupies residues 428-461; the sequence is GDSQGDGFDESSSLSVSKPQTPSVDSSKDPNKTR. Residues 429-487 are tail; that stretch reads DSQGDGFDESSSLSVSKPQTPSVDSSKDPNKTRKIKTVVQEIVNGEVVSSQVQELEEEM. Residues 437–452 are compositionally biased toward polar residues; the sequence is ESSSLSVSKPQTPSVD.

Belongs to the intermediate filament family. As to quaternary structure, heterotetramer of two type I and two type II keratins. Keratin-3 associates with keratin-12. Expressed in the corneal epithelium (at protein level). Also expressed in the suprabasal limbal epithelium of the cornea (at protein level).

In terms of biological role, involved in corneal epithelium organization, integrity and corneal keratin expression. The polypeptide is Keratin, type I cytoskeletal 12 (Krt12) (Mus musculus (Mouse)).